A 574-amino-acid polypeptide reads, in one-letter code: Multidrug and toxin extrusion protein 1 (574 aa).

The Cytoplasmic segment spans residues 1 to 51 (MEGQAAETNHRAETVVRAELCLSAEQGPETTAYSQKRCLFLPMEVWQEAQQ). The chain crosses the membrane as a helical span at residues 52–72 (LLALAAPAFLSQLMIFLISIV). Topologically, residues 73–86 (SSIFCGHLGKVELD) are extracellular. The helical transmembrane segment at 87–107 (AVSLAITIINITGVAVGTGLA) threads the bilayer. At 108 to 133 (GACDTLISQTFGGSNLKLVGIILQRG) the chain is on the cytoplasmic side. A helical transmembrane segment spans residues 134–154 (ILILLLFCFPCWALLINTESI). At 155-168 (LLLFRQDPEVSKLT) the chain is on the extracellular side. The chain crosses the membrane as a helical span at residues 169–189 (QIYVLIFLPALPAAFLYQLLA). The Cytoplasmic portion of the chain corresponds to 190-204 (KYLQNQGIIYPQVLT). Residues 205–225 (GFIANIFNALFNYILLYVLGL) traverse the membrane as a helical segment. Topologically, residues 226-230 (GVMGS) are extracellular. The helical transmembrane segment at 231 to 251 (ACANTVSQFIQMILLFLYIVW) threads the bilayer. Over 252–271 (RRLYADTWGGWSQACFEEWG) the chain is Cytoplasmic. A helical membrane pass occupies residues 272–291 (AFIRLAVASMLMLCIEWWAF). Residues 292–309 (EISMFLAGVLGMVDLAAQ) are Extracellular-facing. Residues 310–330 (AIIYQVAIVVYLIPLGLCIAG) form a helical membrane-spanning segment. The Cytoplasmic portion of the chain corresponds to 331–350 (SIRVGHGLGAGNTEQAKRSA). The helical transmembrane segment at 351–371 (LVVLCMTELCALLSGILLATL) threads the bilayer. Topologically, residues 372–384 (KDVVAYIFTSDPN) are extracellular. Residues 385 to 405 (IVALVSYVLPVYSACLLFDAC) form a helical membrane-spanning segment. Topologically, residues 406 to 430 (VAACGGILRGSGKLKVGAISHTVGY) are cytoplasmic. Residues 431–451 (YVIGLPLGISLMFAAKLGIIG) traverse the membrane as a helical segment. Residues 452-453 (FW) are Extracellular-facing. Residues 454–472 (FGILACGIAQSIFLIIFVF) form a helical membrane-spanning segment. Residues 473–549 (KIDWKRASEE…AGAAQHTRTL (77 aa)) are Cytoplasmic-facing. Residues 500–541 (KPSVYQEGCPTEQGDVDPGNVESIEFSQSSTSSEGTSPTPAG) are disordered. The segment covering 521–538 (ESIEFSQSSTSSEGTSPT) has biased composition (low complexity). The helical transmembrane segment at 550-570 (ILTRGLALGCAVGTLIIGIVI) threads the bilayer. Residues 571–574 (RLSV) are Extracellular-facing.

The protein belongs to the multi antimicrobial extrusion (MATE) (TC 2.A.66.1) family.

Its subcellular location is the cell membrane. It localises to the apical cell membrane. The catalysed reaction is thiamine(out) + H(+)(in) = thiamine(in) + H(+)(out). It carries out the reaction estrone 3-sulfate(in) + H(+)(out) = estrone 3-sulfate(out) + H(+)(in). It catalyses the reaction creatinine(in) + H(+)(out) = creatinine(out) + H(+)(in). The enzyme catalyses agmatine(in) + H(+)(out) = agmatine(out) + H(+)(in). Functionally, multidrug efflux pump that functions as a H(+)/organic cation antiporter. Mediates the secretion of cationic compounds including drugs, toxins and endogenous metabolites. Plays a role physiological role in the excretion of drugs, toxins and endogenous metabolites through the kidney and liver, into urine and bile respectively. This chain is Multidrug and toxin extrusion protein 1 (slc47a1), found in Xenopus tropicalis (Western clawed frog).